Consider the following 94-residue polypeptide: Large ribosomal subunit protein uL23 (94 aa).

It belongs to the universal ribosomal protein uL23 family. Part of the 50S ribosomal subunit. Contacts protein L29, and trigger factor when it is bound to the ribosome.

In terms of biological role, one of the early assembly proteins it binds 23S rRNA. One of the proteins that surrounds the polypeptide exit tunnel on the outside of the ribosome. Forms the main docking site for trigger factor binding to the ribosome. In Geobacter metallireducens (strain ATCC 53774 / DSM 7210 / GS-15), this protein is Large ribosomal subunit protein uL23.